The following is a 172-amino-acid chain: MQNKRDSYNREDLLASSQGELFGEGYPQLPAPNMLMMDRITKMSETEGEFGKGLILAELDITPDLWFFDCHFPGDPVMPGCLGLDAMWQLVGFFLGWVGGKGKGRALGVGEVKFTGQILPTAKKVTYEINMKRVVNRKLVMGLADGRVLVDGKEIYVAKDLKVGLFQDTSAF.

Residue H71 is part of the active site.

It belongs to the thioester dehydratase family. FabA subfamily. As to quaternary structure, homodimer.

The protein resides in the cytoplasm. It catalyses the reaction a (3R)-hydroxyacyl-[ACP] = a (2E)-enoyl-[ACP] + H2O. The enzyme catalyses (3R)-hydroxydecanoyl-[ACP] = (2E)-decenoyl-[ACP] + H2O. It carries out the reaction (2E)-decenoyl-[ACP] = (3Z)-decenoyl-[ACP]. Its pathway is lipid metabolism; fatty acid biosynthesis. In terms of biological role, necessary for the introduction of cis unsaturation into fatty acids. Catalyzes the dehydration of (3R)-3-hydroxydecanoyl-ACP to E-(2)-decenoyl-ACP and then its isomerization to Z-(3)-decenoyl-ACP. Can catalyze the dehydratase reaction for beta-hydroxyacyl-ACPs with saturated chain lengths up to 16:0, being most active on intermediate chain length. This is 3-hydroxydecanoyl-[acyl-carrier-protein] dehydratase from Vibrio cholerae serotype O1 (strain ATCC 39541 / Classical Ogawa 395 / O395).